The chain runs to 262 residues: 3-methyl-2-oxobutanoate hydroxymethyltransferase (262 aa).

Mg(2+) contacts are provided by Asp43 and Asp82. Residues 43–44, Asp82, and Lys110 each bind 3-methyl-2-oxobutanoate; that span reads DS. Glu112 provides a ligand contact to Mg(2+). Catalysis depends on Glu179, which acts as the Proton acceptor.

The protein belongs to the PanB family. As to quaternary structure, homodecamer; pentamer of dimers. Requires Mg(2+) as cofactor.

It localises to the cytoplasm. It catalyses the reaction 3-methyl-2-oxobutanoate + (6R)-5,10-methylene-5,6,7,8-tetrahydrofolate + H2O = 2-dehydropantoate + (6S)-5,6,7,8-tetrahydrofolate. It participates in cofactor biosynthesis; (R)-pantothenate biosynthesis; (R)-pantoate from 3-methyl-2-oxobutanoate: step 1/2. In terms of biological role, catalyzes the reversible reaction in which hydroxymethyl group from 5,10-methylenetetrahydrofolate is transferred onto alpha-ketoisovalerate to form ketopantoate. In Sodalis glossinidius (strain morsitans), this protein is 3-methyl-2-oxobutanoate hydroxymethyltransferase.